The following is a 62-amino-acid chain: Large ribosomal subunit protein uL30 (62 aa).

It belongs to the universal ribosomal protein uL30 family. In terms of assembly, part of the 50S ribosomal subunit.

The protein is Large ribosomal subunit protein uL30 of Pseudoalteromonas atlantica (strain T6c / ATCC BAA-1087).